We begin with the raw amino-acid sequence, 477 residues long: Glycogen synthase (477 aa).

Lys15 contacts ADP-alpha-D-glucose.

This sequence belongs to the glycosyltransferase 1 family. Bacterial/plant glycogen synthase subfamily.

The enzyme catalyses [(1-&gt;4)-alpha-D-glucosyl](n) + ADP-alpha-D-glucose = [(1-&gt;4)-alpha-D-glucosyl](n+1) + ADP + H(+). The protein operates within glycan biosynthesis; glycogen biosynthesis. Functionally, synthesizes alpha-1,4-glucan chains using ADP-glucose. In Shigella sonnei (strain Ss046), this protein is Glycogen synthase.